The sequence spans 500 residues: Glutamate--tRNA ligase (500 aa).

A 'HIGH' region motif is present at residues 12–22 (PSPTGHLHIGN). The short motif at 259–263 (KLSKR) is the 'KMSKS' region element. Lys-262 lines the ATP pocket.

This sequence belongs to the class-I aminoacyl-tRNA synthetase family. Glutamate--tRNA ligase type 1 subfamily. As to quaternary structure, monomer.

Its subcellular location is the cytoplasm. The enzyme catalyses tRNA(Glu) + L-glutamate + ATP = L-glutamyl-tRNA(Glu) + AMP + diphosphate. Catalyzes the attachment of glutamate to tRNA(Glu) in a two-step reaction: glutamate is first activated by ATP to form Glu-AMP and then transferred to the acceptor end of tRNA(Glu). The polypeptide is Glutamate--tRNA ligase (Lactobacillus delbrueckii subsp. bulgaricus (strain ATCC 11842 / DSM 20081 / BCRC 10696 / JCM 1002 / NBRC 13953 / NCIMB 11778 / NCTC 12712 / WDCM 00102 / Lb 14)).